A 244-amino-acid polypeptide reads, in one-letter code: Glucosamine-6-phosphate deaminase (244 aa).

The active-site Proton acceptor; for enolization step is aspartate 67. The For ring-opening step role is filled by asparagine 136. Histidine 138 functions as the Proton acceptor; for ring-opening step in the catalytic mechanism. Catalysis depends on glutamate 143, which acts as the For ring-opening step.

The protein belongs to the glucosamine/galactosamine-6-phosphate isomerase family. NagB subfamily.

The catalysed reaction is alpha-D-glucosamine 6-phosphate + H2O = beta-D-fructose 6-phosphate + NH4(+). It participates in amino-sugar metabolism; N-acetylneuraminate degradation; D-fructose 6-phosphate from N-acetylneuraminate: step 5/5. Its function is as follows. Catalyzes the reversible isomerization-deamination of glucosamine 6-phosphate (GlcN6P) to form fructose 6-phosphate (Fru6P) and ammonium ion. The polypeptide is Glucosamine-6-phosphate deaminase (Clostridium botulinum (strain Loch Maree / Type A3)).